The sequence spans 634 residues: Kelch-like protein 22 (634 aa).

Ala-2 is modified (N-acetylalanine). Residues 50 to 117 (FDVVLVVEGR…IYTSELELSL (68 aa)) form the BTB domain. Kelch repeat units lie at residues 299–349 (CVVG…VLNN), 350–399 (FVYL…VVGR), 400–446 (YIYA…TLEG), 448–493 (MYVT…TLLD), 494–544 (KLYV…VLDT), and 545–593 (RIYV…VLTL). At Thr-463 the chain carries Phosphothreonine. Phosphotyrosine is present on Tyr-466. The interval 600 to 634 (EPPRGTPDRSQADPDFASEVMSVSDWEEFDNSSED) is disordered. Residue Thr-605 is modified to Phosphothreonine. Over residues 624 to 634 (DWEEFDNSSED) the composition is skewed to acidic residues.

In terms of assembly, component of the BCR(KLHL22) E3 ubiquitin ligase complex, at least composed of CUL3, KLHL22 and RBX1. Interacts with PLK1. Interacts with DEPDC5 (via DEP domain); the interaction depends on amino acid availability. Interacts with YWHAE; required for the nuclear localization of KLHL22 upon amino acid starvation.

Its subcellular location is the cytoplasm. It is found in the cytosol. The protein resides in the cytoskeleton. The protein localises to the microtubule organizing center. It localises to the centrosome. Its subcellular location is the spindle. It is found in the nucleus. The protein resides in the lysosome. It participates in protein modification; protein ubiquitination. In terms of biological role, substrate-specific adapter of a BCR (BTB-CUL3-RBX1) E3 ubiquitin ligase complex required for chromosome alignment and localization of PLK1 at kinetochores. The BCR(KLHL22) ubiquitin ligase complex mediates monoubiquitination of PLK1, leading to PLK1 dissociation from phosphoreceptor proteins and subsequent removal from kinetochores, allowing silencing of the spindle assembly checkpoint (SAC) and chromosome segregation. Monoubiquitination of PLK1 does not lead to PLK1 degradation. The BCR(KLHL22) ubiquitin ligase complex is also responsible for the amino acid-stimulated 'Lys-48' polyubiquitination and proteasomal degradation of DEPDC5. Through the degradation of DEPDC5, releases the GATOR1 complex-mediated inhibition of the TORC1 pathway. It is therefore an amino acid-dependent activator within the amino acid-sensing branch of the TORC1 pathway, indirectly regulating different cellular processes including cell growth and autophagy. This Ailuropoda melanoleuca (Giant panda) protein is Kelch-like protein 22 (KLHL22).